Reading from the N-terminus, the 440-residue chain is Putative F-box/LRR-repeat protein At5g15620 (440 aa).

An F-box domain is found at Met1 to Phe52. 7 LRR repeats span residues Phe4–Ser31, Leu126–Ser153, Phe156–Arg181, Ser194–Arg205, Pro210–Asp235, Tyr264–Val289, and Glu318–Gly343.

This Arabidopsis thaliana (Mouse-ear cress) protein is Putative F-box/LRR-repeat protein At5g15620.